A 204-amino-acid chain; its full sequence is CASP-like protein 3A1 (204 aa).

Residues 1–39 (MGSIGNGRNGSEVGIQIPAMGNKEVLERPAIPRWPRLGV) are Cytoplasmic-facing. Residues 40–60 (VMVATRAVALVMAVLSMALMI) form a helical membrane-spanning segment. Topologically, residues 61–88 (SAKQRGSLKIFGIEIPLYANWSFSDSLE) are extracellular. N-linked (GlcNAc...) asparagine glycosylation occurs at Asn-80. The helical transmembrane segment at 89–109 (YLVGMSAVSAAYCLAQLLLTA) threads the bilayer. Topologically, residues 110–124 (HKAVKNAPVVQSRNY) are cytoplasmic. The helical transmembrane segment at 125–145 (AWLLFTGDQIFAYAMMSAGSA) threads the bilayer. At 146-179 (AAAVANLNRTGIRHTALPNFCKPLPRFCDLSAAS) the chain is on the extracellular side. Asn-153 carries N-linked (GlcNAc...) asparagine glycosylation. Residues 180 to 200 (IACAFLSCIFLAASAVIDVIW) form a helical membrane-spanning segment. Over 201-204 (LSNM) the chain is Cytoplasmic.

It belongs to the Casparian strip membrane proteins (CASP) family. As to quaternary structure, homodimer and heterodimers.

The protein localises to the cell membrane. The polypeptide is CASP-like protein 3A1 (Oryza sativa subsp. indica (Rice)).